The primary structure comprises 231 residues: Fibrillarin-like rRNA/tRNA 2'-O-methyltransferase (231 aa).

Residues 88–89 (TT), 106–107 (EF), 131–132 (DA), and 151–154 (DVAQ) contribute to the S-adenosyl-L-methionine site.

Belongs to the methyltransferase superfamily. Fibrillarin family. In terms of assembly, interacts with nop5. Component of box C/D small ribonucleoprotein (sRNP) particles that contain rpl7ae, FlpA and nop5, plus a guide RNA.

Its function is as follows. Involved in pre-rRNA and tRNA processing. Utilizes the methyl donor S-adenosyl-L-methionine to catalyze the site-specific 2'-hydroxyl methylation of ribose moieties in rRNA and tRNA. Site specificity is provided by a guide RNA that base pairs with the substrate. Methylation occurs at a characteristic distance from the sequence involved in base pairing with the guide RNA. The chain is Fibrillarin-like rRNA/tRNA 2'-O-methyltransferase from Methanococcus aeolicus (strain ATCC BAA-1280 / DSM 17508 / OCM 812 / Nankai-3).